The sequence spans 185 residues: Capsid protein (185 aa).

The disordered stretch occupies residues 136–185 (NAPILSTLPETTVVRRRDRGRSPRRRTPSPRRRRSQSPRRRRSQSRESQC). The span at 149–178 (VRRRDRGRSPRRRTPSPRRRRSQSPRRRRS) shows a compositional bias: basic residues. S157, S164, and S172 each carry phosphoserine; by host. The stretch at 157–163 (SPRRRTP) is one 1; half-length repeat. The segment at 157–179 (SPRRRTPSPRRRRSQSPRRRRSQ) is 3 X 8 AA repeats of S-P-R-R-R-[PR]-S-Q. The Bipartite nuclear localization signal motif lies at 160-177 (RRTPSPRRRRSQSPRRRR). Tandem repeats lie at residues 164–171 (SPRRRRSQ) and 172–179 (SPRRRRSQ). Positions 179-185 (QSRESQC) are RNA binding.

The protein belongs to the orthohepadnavirus core antigen family. Homodimerizes, then multimerizes. Interacts with cytosol exposed regions of viral L glycoprotein present in the reticulum-to-Golgi compartment. Interacts with human FLNB. Phosphorylated form interacts with host importin alpha; this interaction depends on the exposure of the NLS, which itself depends upon genome maturation and/or phosphorylation of the capsid protein. Interacts with host NUP153. Post-translationally, phosphorylated by host SRPK1, SRPK2, and maybe protein kinase C or GAPDH. Phosphorylation is critical for pregenomic RNA packaging. Protein kinase C phosphorylation is stimulated by HBx protein and may play a role in transport of the viral genome to the nucleus at the late step during the viral replication cycle.

The protein resides in the virion. It is found in the host cytoplasm. Its function is as follows. Self assembles to form an icosahedral capsid. Most capsids appear to be large particles with an icosahedral symmetry of T=4 and consist of 240 copies of capsid protein, though a fraction forms smaller T=3 particles consisting of 180 capsid proteins. Entering capsids are transported along microtubules to the nucleus. Phosphorylation of the capsid is thought to induce exposure of nuclear localization signal in the C-terminal portion of the capsid protein that allows binding to the nuclear pore complex via the importin (karyopherin-) alpha and beta. Capsids are imported in intact form through the nuclear pore into the nuclear basket, where it probably binds NUP153. Only capsids that contain the mature viral genome can release the viral DNA and capsid protein into the nucleoplasm. Immature capsids get stuck in the basket. Capsids encapsulate the pre-genomic RNA and the P protein. Pre-genomic RNA is reverse-transcribed into DNA while the capsid is still in the cytoplasm. The capsid can then either be directed to the nucleus, providing more genomes for transcription, or bud through the endoplasmic reticulum to provide new virions. This is Capsid protein from Homo sapiens (Human).